The primary structure comprises 463 residues: Increased DNA methylation 3 (463 aa).

The span at 169–182 (NLDESRETEQDCSR) shows a compositional bias: basic and acidic residues. 2 disordered regions span residues 169–199 (NLDE…DYNS) and 300–347 (RRFK…TTGT). Over residues 184 to 199 (GDATANGVVTNEDYNS) the composition is skewed to polar residues. Residues 300 to 310 (RRFKNSSKKAT) are compositionally biased toward basic residues.

In terms of assembly, interacts with MBD7 (via C-terminus), IDM1 and IDM2. Part of a complex made of MBD7, IDM1, IDM2 and IDM3.

The protein localises to the nucleus. In terms of biological role, acts as an anti-silencing factor that prevents DNA hypermethylation and gene repression. This Arabidopsis thaliana (Mouse-ear cress) protein is Increased DNA methylation 3.